A 583-amino-acid chain; its full sequence is 2-succinyl-5-enolpyruvyl-6-hydroxy-3-cyclohexene-1-carboxylate synthase (583 aa).

The protein belongs to the TPP enzyme family. MenD subfamily. As to quaternary structure, homodimer. The cofactor is Mg(2+). Mn(2+) is required as a cofactor. Thiamine diphosphate serves as cofactor.

It carries out the reaction isochorismate + 2-oxoglutarate + H(+) = 5-enolpyruvoyl-6-hydroxy-2-succinyl-cyclohex-3-ene-1-carboxylate + CO2. Its pathway is quinol/quinone metabolism; 1,4-dihydroxy-2-naphthoate biosynthesis; 1,4-dihydroxy-2-naphthoate from chorismate: step 2/7. The protein operates within cofactor biosynthesis; phylloquinone biosynthesis. In terms of biological role, catalyzes the thiamine diphosphate-dependent decarboxylation of 2-oxoglutarate and the subsequent addition of the resulting succinic semialdehyde-thiamine pyrophosphate anion to isochorismate to yield 2-succinyl-5-enolpyruvyl-6-hydroxy-3-cyclohexene-1-carboxylate (SEPHCHC). In Trichormus variabilis (strain ATCC 29413 / PCC 7937) (Anabaena variabilis), this protein is 2-succinyl-5-enolpyruvyl-6-hydroxy-3-cyclohexene-1-carboxylate synthase.